Consider the following 840-residue polypeptide: Transient receptor potential cation channel subfamily V member 1 (840 aa).

The segment covering 1–12 has biased composition (low complexity); sequence MKNWGSSDSGGS. The segment at 1–43 is disordered; the sequence is MKNWGSSDSGGSEDPPQEDSCLDPLDGDPNSRPVPAKPHIFPT. Residues 1 to 433 lie on the Cytoplasmic side of the membrane; that stretch reads MKNWGSSDSG…QDKWDRFVKR (433 aa). ANK repeat units follow at residues 111-139 and 154-186; these read KLYDRRKIFEAVAQNNCEELQSLLLFLQK and TGKTCLLKAMLNLHDGQNDTIPLLLEIARQTDS. ATP-binding positions include Arg116, Lys156, Lys161, Asn165, 200–203, and 211–212; these read YKGQ and ER. ANK repeat units lie at residues 204-229, 250-277, 286-322, and 336-359; these read TALHIAIERRNMALVTLLVENGADVQ, ELPLSLAACTNQLGIVKFLLQNSWQPAD, NTVLHALVEVADNTADNTKFVTSMYNEILILGAKLHP, and TPLALAARSGKIGVLAYILQREIQ. Thr371 is subject to Phosphothreonine; by PKA; in vitro. One copy of the ANK 7 repeat lies at 394–416; sequence NSVLEVIAYSSSETPNRHDMLLV. A helical membrane pass occupies residues 434–455; it reads IFYFNFFIYCLYMIIFTTAAYY. Topologically, residues 456–473 are extracellular; that stretch reads RPVDGLPPYKLKHTVGDY. A helical transmembrane segment spans residues 474–498; sequence FRVTGEILSVLGGVYFFFRGIQYFL. Residues 499 to 511 lie on the Cytoplasmic side of the membrane; sequence QRRPSLKTLFVDS. Ser503 bears the Phosphoserine; by PKC/PRKCE mark. 512–513 contacts resiniferatoxin; sequence YS. The chain crosses the membrane as a helical span at residues 512–533; the sequence is YSEMLFFVQSLFMLGTVVLYFC. Over 534 to 536 the chain is Extracellular; sequence HHK. A helical membrane pass occupies residues 537–557; that stretch reads EYVASMVFSLAMGWTNMLYYT. The resiniferatoxin site is built by Thr551 and Arg558. Residues 558–560 lie on the Cytoplasmic side of the membrane; that stretch reads RGF. Residues 561 to 599 traverse the membrane as a helical segment; sequence QQMGIYAVMIEKMILRDLCRFMFVYLVFLFGFSTAVVTL. The Extracellular segment spans residues 600–631; it reads IEDGKNNSVPTESTLHRWRGPGCRPPDSSYNS. Asn605 carries an N-linked (GlcNAc...) asparagine glycan. The segment at residues 632-653 is an intramembrane region (pore-forming); sequence LYSTCLELFKFTIGMGDLEFTE. Gly645 lines the Na(+) pocket. Positions 645–648 match the Selectivity filter motif; sequence GMGD. Asp648 is a binding site for Ca(2+). Over 654 to 657 the chain is Extracellular; that stretch reads NYDF. Residues 658 to 684 traverse the membrane as a helical segment; the sequence is KAVFIILLLAYVILTYILLLNMLIALM. Residues 685 to 840 lie on the Cytoplasmic side of the membrane; it reads GETVNKIAQE…FKDPVGLGEK (156 aa). The segment at 686–714 is AD; sequence ETVNKIAQESKNIWKLQRAITILDTEKSF. Thr706 is modified (phosphothreonine). An interaction with calmodulin region spans residues 769 to 803; that stretch reads EGIKRTLSFSLRSGRVSGRNWKNFSLVPLLRDAST. Phosphoserine is present on Ser776. The interval 779–794 is required for PIP2-mediated channel inhibition; it reads LRSGRVSGRNWKNFSL. Phosphoserine; by PKC/PRKCE and PKC/PRKCZ is present on Ser802. Residue Ser822 is modified to Phosphoserine.

Belongs to the transient receptor (TC 1.A.4) family. TrpV subfamily. TRPV1 sub-subfamily. In terms of assembly, homotetramer. Interacts with PIRT. May also form a heteromeric channel with TRPV3. Interacts with CALM, PRKCM and CSK. Interacts with PRKCG and NTRK1, probably by forming a trimeric complex. Interacts with the Scolopendra mutilans RhTx toxin. Interacts with TMEM100. Interacts with PACS2. Post-translationally, phosphorylation by PKA reverses capsaicin-induced dephosphorylation at multiple sites. Phosphorylation by CAMKII seems to regulate binding to vanilloids. Phosphorylated and modulated by PRKCE, PRKCM and probably PRKCZ. Dephosphorylation by calcineurin seems to lead to receptor desensitization and phosphorylation by CAMKII recovers activity.

The protein resides in the postsynaptic cell membrane. It is found in the cell projection. It localises to the dendritic spine membrane. Its subcellular location is the cell membrane. It catalyses the reaction Ca(2+)(in) = Ca(2+)(out). The enzyme catalyses Mg(2+)(in) = Mg(2+)(out). It carries out the reaction Na(+)(in) = Na(+)(out). The catalysed reaction is K(+)(in) = K(+)(out). Its activity is regulated as follows. Channel activity is activated via the interaction with PIRT and phosphatidylinositol 4,5-bisphosphate (PIP2). Both PIRT and PIP2 are required to activate channel activity. The channel is sensitized by ATP binding. Repeated stimulation with capsaicin gives rise to progressively smaller responses, due to desensitization. This desensitization is triggered by the influx of calcium ions and is inhibited by elevated ATP levels. Ca(2+) and CALM displace ATP from its binding site and trigger a conformation change that leads to a closed, desensitized channel. Intracellular PIP2 inhibits desensitization. The double-knot toxin (DkTx) from the Chinese earth tiger tarantula activates the channel and traps it in an open conformation. The Scolopendra mutilans RhTx toxin potentiates the heat activation pathway mediated by this channel by binding to the charge-rich outer pore region (in an activated state). Its function is as follows. Non-selective calcium permeant cation channel involved in detection of noxious chemical and thermal stimuli. Seems to mediate proton influx and may be involved in intracellular acidosis in nociceptive neurons. Involved in mediation of inflammatory pain and hyperalgesia. Sensitized by a phosphatidylinositol second messenger system activated by receptor tyrosine kinases, which involves PKC isozymes and PCL. Activated by vanilloids, like capsaicin, and temperatures higher than 42 degrees Celsius. Upon activation, exhibits a time- and Ca(2+)-dependent outward rectification, followed by a long-lasting refractory state. Mild extracellular acidic pH (6.5) potentiates channel activation by noxious heat and vanilloids, whereas acidic conditions (pH &lt;6) directly activate the channel. Can be activated by endogenous compounds, including 12-hydroperoxytetraenoic acid and bradykinin. Acts as ionotropic endocannabinoid receptor with central neuromodulatory effects. Triggers a form of long-term depression (TRPV1-LTD) mediated by the endocannabinoid anandamine in the hippocampus and nucleus accumbens by affecting AMPA receptors endocytosis. In Canis lupus familiaris (Dog), this protein is Transient receptor potential cation channel subfamily V member 1 (TRPV1).